Here is a 277-residue protein sequence, read N- to C-terminus: NH(3)-dependent NAD(+) synthetase (277 aa).

36–43 provides a ligand contact to ATP; sequence GLSGGIDS. Asp-42 is a binding site for Mg(2+). Arg-118 provides a ligand contact to deamido-NAD(+). Residue Thr-138 participates in ATP binding. Glu-143 contributes to the Mg(2+) binding site. Lys-167 and Ser-189 together coordinate ATP.

It belongs to the NAD synthetase family. Homodimer.

The enzyme catalyses deamido-NAD(+) + NH4(+) + ATP = AMP + diphosphate + NAD(+) + H(+). It functions in the pathway cofactor biosynthesis; NAD(+) biosynthesis; NAD(+) from deamido-NAD(+) (ammonia route): step 1/1. In terms of biological role, catalyzes the ATP-dependent amidation of deamido-NAD to form NAD. Uses ammonia as a nitrogen source. This Chlorobaculum parvum (strain DSM 263 / NCIMB 8327) (Chlorobium vibrioforme subsp. thiosulfatophilum) protein is NH(3)-dependent NAD(+) synthetase.